We begin with the raw amino-acid sequence, 481 residues long: Aspartyl/glutamyl-tRNA(Asn/Gln) amidotransferase subunit B (481 aa).

This sequence belongs to the GatB/GatE family. GatB subfamily. In terms of assembly, heterotrimer of A, B and C subunits.

It catalyses the reaction L-glutamyl-tRNA(Gln) + L-glutamine + ATP + H2O = L-glutaminyl-tRNA(Gln) + L-glutamate + ADP + phosphate + H(+). The enzyme catalyses L-aspartyl-tRNA(Asn) + L-glutamine + ATP + H2O = L-asparaginyl-tRNA(Asn) + L-glutamate + ADP + phosphate + 2 H(+). Allows the formation of correctly charged Asn-tRNA(Asn) or Gln-tRNA(Gln) through the transamidation of misacylated Asp-tRNA(Asn) or Glu-tRNA(Gln) in organisms which lack either or both of asparaginyl-tRNA or glutaminyl-tRNA synthetases. The reaction takes place in the presence of glutamine and ATP through an activated phospho-Asp-tRNA(Asn) or phospho-Glu-tRNA(Gln). The chain is Aspartyl/glutamyl-tRNA(Asn/Gln) amidotransferase subunit B from Prosthecochloris aestuarii (strain DSM 271 / SK 413).